The sequence spans 541 residues: Glutamyl-tRNA(Gln) amidotransferase subunit B, mitochondrial (541 aa).

Belongs to the GatB/GatE family. GatB subfamily. In terms of assembly, subunit of the heterotrimeric GatFAB amidotransferase (AdT) complex, composed of A (HER2), B (PET112) and F (YGR102C) subunits.

It localises to the mitochondrion. The catalysed reaction is L-glutamyl-tRNA(Gln) + L-glutamine + ATP + H2O = L-glutaminyl-tRNA(Gln) + L-glutamate + ADP + phosphate + H(+). Functionally, allows the formation of correctly charged Gln-tRNA(Gln) through the transamidation of misacylated Glu-tRNA(Gln) in the mitochondria. The reaction takes place in the presence of glutamine and ATP through an activated gamma-phospho-Glu-tRNA(Gln). This Saccharomyces cerevisiae (strain ATCC 204508 / S288c) (Baker's yeast) protein is Glutamyl-tRNA(Gln) amidotransferase subunit B, mitochondrial.